Here is a 101-residue protein sequence, read N- to C-terminus: Small ribosomal subunit protein uS14A (101 aa).

This sequence belongs to the universal ribosomal protein uS14 family. As to quaternary structure, part of the 30S ribosomal subunit. Contacts proteins S3 and S10.

In terms of biological role, binds 16S rRNA, required for the assembly of 30S particles and may also be responsible for determining the conformation of the 16S rRNA at the A site. This chain is Small ribosomal subunit protein uS14A, found in Salinispora tropica (strain ATCC BAA-916 / DSM 44818 / JCM 13857 / NBRC 105044 / CNB-440).